We begin with the raw amino-acid sequence, 275 residues long: Penicillin-insensitive murein endopeptidase (275 aa).

The signal sequence occupies residues 1 to 19 (MKNWIVGMVALVTMVPVMA). 3 cysteine pairs are disulfide-bonded: C44-C264, C187-C235, and C216-C223. Zn(2+) contacts are provided by H110, H113, D120, D147, and H211. The disordered stretch occupies residues 227-262 (DTPPPGDGCGAELESWFQPPPPSAKPGKTLPPPLPP). The span at 244–262 (QPPPPSAKPGKTLPPPLPP) shows a compositional bias: pro residues.

It belongs to the peptidase M74 family. As to quaternary structure, dimer. The cofactor is Zn(2+).

It localises to the periplasm. Functionally, murein endopeptidase that cleaves the D-alanyl-meso-2,6-diamino-pimelyl amide bond that connects peptidoglycan strands. Likely plays a role in the removal of murein from the sacculus. The chain is Penicillin-insensitive murein endopeptidase from Yersinia pestis bv. Antiqua (strain Antiqua).